Consider the following 281-residue polypeptide: Insulin-like growth factor-binding protein 7 (281 aa).

Positions 1–25 are cleaved as a signal peptide; sequence MERPPRALLLGAAGLLLLLLPLSSS. Residues 27–113 enclose the IGFBP N-terminal domain; sequence SSDACGPCVP…PATLAVCVCK (87 aa). 8 disulfides stabilise this stretch: C31/C56, C34/C58, C39/C59, C47/C62, C70/C86, C80/C110, C112/C130, and C119/C155. The region spanning 98 to 157 is the Kazal-like domain; that stretch reads GAAAGGPATLAVCVCKSRYPVCGSNGITYPSGCQLRAASLRAESRGEKAITQVSKGTCEQ. In terms of domain architecture, Ig-like C2-type spans 159 to 263; it reads PSIVTPPKDI…GQASAAAKIT (105 aa). N170 carries N-linked (GlcNAc...) asparagine glycosylation. Cysteines 180 and 247 form a disulfide. S238 carries the post-translational modification Phosphoserine.

In terms of assembly, may interact with VPS24/CHMP3; the relevance of such interaction however remains unclear. Interacts with CD93; this interaction plays a role in endothelial cells angiogenesis. In terms of processing, N-glycosylated. As to expression, expressed at high levels in lung, kidney, small intestine, testis and uterus and at moderate levels in liver.

Its subcellular location is the secreted. Functionally, binds IGF1 and IGF2 with a relatively low affinity. Stimulates prostacyclin (PGI2) production. Stimulates cell adhesion. Acts as a ligand for CD93 to play a role in angiogenesis. This is Insulin-like growth factor-binding protein 7 (Igfbp7) from Mus musculus (Mouse).